Consider the following 305-residue polypeptide: DNA-directed RNA polymerase 35 kDa subunit (305 aa).

This sequence belongs to the poxviridae DNA-directed RNA polymerase 35 kDa subunit family. The DNA-dependent RNA polymerase used for intermediate and late genes expression consists of eight subunits 147 kDa, 133 kDa, 35 kDa, 30 kDa, 22 kDa, 19 kDa, 18 kDa and 7 kDa totalling more than 500 kDa in mass. The same holoenzyme, with the addition of the transcription-specificity factor RAP94, is used for early gene expression.

The protein localises to the virion. The enzyme catalyses RNA(n) + a ribonucleoside 5'-triphosphate = RNA(n+1) + diphosphate. Functionally, part of the DNA-dependent RNA polymerase which catalyzes the transcription of viral DNA into RNA using the four ribonucleoside triphosphates as substrates. Responsible for the transcription of early, intermediate and late genes. DNA-dependent RNA polymerase associates with the early transcription factor (ETF), itself composed of D6 and A7, thereby allowing the early genes transcription. Late transcription, and probably also intermediate transcription, require newly synthesized RNA polymerase. This is DNA-directed RNA polymerase 35 kDa subunit (OPG156) from Variola virus (isolate Human/India/Ind3/1967) (VARV).